Here is a 311-residue protein sequence, read N- to C-terminus: 3'(2'),5'-bisphosphate nucleotidase 1 (311 aa).

Asp49 serves as the catalytic Proton acceptor. Mg(2+)-binding residues include Glu72, Asp116, Leu118, and Asp119. Residue Thr121 is the Proton acceptor of the active site. AMP contacts are provided by Thr202, His205, Gly227, and Lys231. Position 254 (Asp254) interacts with Mg(2+).

Belongs to the inositol monophosphatase superfamily. It depends on Mg(2+) as a cofactor.

The catalysed reaction is adenosine 3',5'-bisphosphate + H2O = AMP + phosphate. It catalyses the reaction adenosine 2',5'-bisphosphate + H2O = AMP + phosphate. It carries out the reaction 3'-phosphoadenylyl sulfate + H2O = adenosine 5'-phosphosulfate + phosphate. The enzyme catalyses 1D-myo-inositol 1,4-bisphosphate + H2O = 1D-myo-inositol 4-phosphate + phosphate. The catalysed reaction is 1D-myo-inositol 1,3,4-trisphosphate + H2O = 1D-myo-inositol 3,4-bisphosphate + phosphate. Its activity is regulated as follows. Inhibited by Li(+) and Ca(2+), but not by Na(+). Its function is as follows. Phosphatase that converts 3'(2')-phosphoadenosine 5'-phosphate (PAP) to AMP and adenosine 3'-phosphate 5'-phosphosulfate (PAPS) to adenosine 5'-phosphosulfate (APS). Is also able to hydrolyze inositol 1,4-bisphosphate (Ins(1,4)P2) and inositol 1,3,4-trisphosphate (Ins(1,3,4)P3), but is not active on AMP, 3'-AMP, fructose-1,6-bisphosphate, Ins(1)P, Ins(2)P and Ins(1,4,5)P3. Probably prevents the toxic accumulation of PAP, a compound which inhibits a variety of proteins, including PAPS-utilizing enzymes such as sulfotransferases, and RNA processing enzymes. Could also play a role in inositol recycling and phosphoinositide metabolism. The protein is 3'(2'),5'-bisphosphate nucleotidase 1 (bpnt1) of Dictyostelium discoideum (Social amoeba).